A 402-amino-acid polypeptide reads, in one-letter code: Non-homologous end joining protein Ku (402 aa).

The region spanning 12-185 (ISFGLVTIPV…VAALTGIAQP (174 aa)) is the Ku domain. Positions 261-402 (QRAAGGATGG…GPDETAPGGP (142 aa)) are disordered. 2 stretches are compositionally biased toward low complexity: residues 299–308 (GDPAASVPGV) and 332–343 (VPGVPATAVPGT). Residues 344–358 (PGAPVPTAPGVPSAP) show a composition bias toward pro residues. The segment covering 359-376 (APGTSPTSVPGVQTAPNG) has biased composition (low complexity).

The protein belongs to the prokaryotic Ku family. As to quaternary structure, homodimer. Interacts with LigD.

Its function is as follows. With LigD forms a non-homologous end joining (NHEJ) DNA repair enzyme, which repairs dsDNA breaks with reduced fidelity. Binds linear dsDNA with 5'- and 3'- overhangs but not closed circular dsDNA nor ssDNA. Recruits and stimulates the ligase activity of LigD. The sequence is that of Non-homologous end joining protein Ku from Symbiobacterium thermophilum (strain DSM 24528 / JCM 14929 / IAM 14863 / T).